The sequence spans 135 residues: Class I hydrophobin dewB (135 aa).

Residues 1–17 (MKFIGLATLSLFALASA) form the signal peptide. Intrachain disulfides connect C35-C109, C43-C103, C44-C84, and C110-C128.

Belongs to the fungal hydrophobin family. As to quaternary structure, self-assembles to form functional amyloid fibrils called rodlets. Self-assembly into fibrillar rodlets occurs spontaneously at hydrophobic:hydrophilic interfaces and the rodlets further associate laterally to form amphipathic monolayers.

Its subcellular location is the secreted. It localises to the spore wall. Functionally, aerial growth, conidiation, and dispersal of filamentous fungi in the environment rely upon a capability of their secreting small amphipathic proteins called hydrophobins (HPBs) with low sequence identity. Class I can self-assemble into an outermost layer of rodlet bundles on aerial cell surfaces, conferring cellular hydrophobicity that supports fungal growth, development and dispersal; whereas Class II form highly ordered films at water-air interfaces through intermolecular interactions but contribute nothing to the rodlet structure. DewB is a class I hydrophobin that contributes to the hydrophobicity of the spore surface. The protein is Class I hydrophobin dewB of Emericella nidulans (strain FGSC A4 / ATCC 38163 / CBS 112.46 / NRRL 194 / M139) (Aspergillus nidulans).